We begin with the raw amino-acid sequence, 227 residues long: UPF0758 protein LPC_1989 (227 aa).

The 124-residue stretch at 102–225 (QLSNTQQTYA…YSIFAENKWV (124 aa)) folds into the MPN domain. Residues His-173, His-175, and Asp-186 each coordinate Zn(2+). Positions 173-186 (HNHPSGLSDASQQD) match the JAMM motif motif.

This sequence belongs to the UPF0758 family.

The polypeptide is UPF0758 protein LPC_1989 (Legionella pneumophila (strain Corby)).